We begin with the raw amino-acid sequence, 95 residues long: Secretoglobin family 2A member 1 (95 aa).

The signal sequence occupies residues 1–18 (MKLVFLFLLVTIPICCYA). Residues Asn-35 and Asn-72 are each glycosylated (N-linked (GlcNAc...) asparagine).

Belongs to the secretoglobin family. Lipophilin subfamily. Prostatein is composed of three different peptides called C1, C2 and C3. These form covalent C1:C3 (F) and C2:C3 (S) heterodimers whose non-covalent association forms tetrameric (C1:C3/C3:C2) prostatein molecules. Expressed at very low level in ventral prostate.

Its subcellular location is the secreted. In terms of biological role, part of prostatein which is the major secretory glycoprotein of ventral prostate gland. Steroid-binding protein; can bind non-polar steroids, cholesterol and a group of small proline-rich peptides. The sequence is that of Secretoglobin family 2A member 1 from Rattus norvegicus (Rat).